The following is a 227-amino-acid chain: Endo-1,4-beta-xylanase 1 (227 aa).

The N-terminal stretch at 1–19 (MVSLKSVLAAATAVSSAIA) is a signal peptide. In terms of domain architecture, GH11 spans 37 to 225 (QVTPNAEGWH…SSGESDIYVQ (189 aa)). Glutamate 121 serves as the catalytic Nucleophile. Glutamate 212 functions as the Proton donor in the catalytic mechanism.

Belongs to the glycosyl hydrolase 11 (cellulase G) family.

The catalysed reaction is Endohydrolysis of (1-&gt;4)-beta-D-xylosidic linkages in xylans.. Its pathway is glycan degradation; xylan degradation. This chain is Endo-1,4-beta-xylanase 1, found in Humicola insolens (Soft-rot fungus).